A 308-amino-acid polypeptide reads, in one-letter code: Cytochrome b (308 aa).

Helical transmembrane passes span 1–21 (FGLL…LLAA), 45–66 (WLIR…YLHI), 81–101 (WNIG…GYVX), and 146–166 (FFAL…VHLT). His51 and His65 together coordinate heme b. Heme b-binding residues include His150 and His164. His169 contributes to the a ubiquinone binding site. 3 consecutive transmembrane segments (helical) span residues 194 to 214 (TKDV…ALFS), 256 to 276 (LGGV…PFLH), and 288 to 308 (LSQI…WVSN).

This sequence belongs to the cytochrome b family. The cytochrome bc1 complex contains 11 subunits: 3 respiratory subunits (MT-CYB, CYC1 and UQCRFS1), 2 core proteins (UQCRC1 and UQCRC2) and 6 low-molecular weight proteins (UQCRH/QCR6, UQCRB/QCR7, UQCRQ/QCR8, UQCR10/QCR9, UQCR11/QCR10 and a cleavage product of UQCRFS1). This cytochrome bc1 complex then forms a dimer. Heme b is required as a cofactor.

The protein resides in the mitochondrion inner membrane. Component of the ubiquinol-cytochrome c reductase complex (complex III or cytochrome b-c1 complex) that is part of the mitochondrial respiratory chain. The b-c1 complex mediates electron transfer from ubiquinol to cytochrome c. Contributes to the generation of a proton gradient across the mitochondrial membrane that is then used for ATP synthesis. The protein is Cytochrome b (MT-CYB) of Pomatostomus ruficeps (Chestnut-crowned babbler).